The sequence spans 800 residues: Receptor like protein 26 (800 aa).

The N-terminal stretch at 1–19 (MRLHFCSLLLLYCIVFVSS) is a signal peptide. Over 20-733 (FLTTDALACL…EEEDEVIEWK (714 aa)) the chain is Extracellular. 6 N-linked (GlcNAc...) asparagine glycosylation sites follow: N49, N61, N83, N96, N101, and N113. LRR repeat units follow at residues 89-113 (LHQL…EFSN), 115-138 (TRLE…ISNL), 139-161 (ILLT…VRNL), 162-185 (TKLS…LLPT), 187-212 (PFLS…SSSS), 214-235 (LVRL…ISKL), 236-259 (INLN…VFAP), 260-281 (LKSL…LSSD), 285-307 (PLSL…IFKT), 308-332 (LQNL…FWKL), 334-357 (RLSI…VLLN), and 358-381 (SSVQ…PLGS). 2 N-linked (GlcNAc...) asparagine glycosylation sites follow: N145 and N160. Residue N207 is glycosylated (N-linked (GlcNAc...) asparagine). A glycan (N-linked (GlcNAc...) asparagine) is linked at N247. N342 and N357 each carry an N-linked (GlcNAc...) asparagine glycan. The LRR 13; degenerate repeat unit spans residues 382–401 (IYLSAWNNSFTGNIPLSICN). N-linked (GlcNAc...) asparagine glycans are attached at residues N388 and N401. 10 LRR repeats span residues 402 to 423 (RSSL…PQCL), 424 to 446 (SNLK…EFHS), 448 to 471 (AKTQ…LLNC), 472 to 494 (SSLR…WLKA), 495 to 519 (LPNL…DRGP), 522 to 546 (FPEL…FFVN), 591 to 615 (LTFY…IGLL), 616 to 639 (KELI…LANV), 640 to 663 (TELE…LGSL), and 665 to 688 (FLAY…QFSG). N470 carries N-linked (GlcNAc...) asparagine glycosylation. N-linked (GlcNAc...) asparagine glycans are attached at residues N622 and N638. Residues 734 to 754 (AVFFGYWPGLLLGLVMAHVIA) form a helical membrane-spanning segment. The Cytoplasmic segment spans residues 755–800 (SFKPKWFVKILGPAKGKQVDPVRLFMNLDSRWDSFNNKDTVEEEVI).

It belongs to the RLP family.

The protein localises to the cell membrane. The polypeptide is Receptor like protein 26 (Arabidopsis thaliana (Mouse-ear cress)).